The following is a 410-amino-acid chain: NADH-quinone oxidoreductase subunit H (410 aa).

The next 9 membrane-spanning stretches (helical) occupy residues 11-31 (LVAA…LVAI), 79-99 (FVYF…FAFI), 119-139 (LPVA…GIVL), 160-180 (VISY…MAGT), 192-212 (GVWY…SMVG), 257-277 (ALAA…NMWA), 283-303 (WWPL…YFWL), 317-337 (ALGW…AAII), and 347-367 (YWTP…VLLL). Residues 376–410 (ARASARQRGDEGTSPEPAFPTPPLLAGATKENAGG) are disordered.

This sequence belongs to the complex I subunit 1 family. In terms of assembly, NDH-1 is composed of 14 different subunits. Subunits NuoA, H, J, K, L, M, N constitute the membrane sector of the complex.

It is found in the cell membrane. The catalysed reaction is a quinone + NADH + 5 H(+)(in) = a quinol + NAD(+) + 4 H(+)(out). In terms of biological role, NDH-1 shuttles electrons from NADH, via FMN and iron-sulfur (Fe-S) centers, to quinones in the respiratory chain. The immediate electron acceptor for the enzyme in this species is believed to be menaquinone. Couples the redox reaction to proton translocation (for every two electrons transferred, four hydrogen ions are translocated across the cytoplasmic membrane), and thus conserves the redox energy in a proton gradient. The protein is NADH-quinone oxidoreductase subunit H of Mycobacterium bovis (strain ATCC BAA-935 / AF2122/97).